The sequence spans 111 residues: Prophage-derived-like uncharacterized protein YozM (111 aa).

The first 24 residues, M1 to E24, serve as a signal peptide directing secretion.

In Bacillus subtilis (strain 168), this protein is Prophage-derived-like uncharacterized protein YozM (yozM).